A 170-amino-acid polypeptide reads, in one-letter code: Flavodoxin (170 aa).

In terms of domain architecture, Flavodoxin-like spans 4–165 (IGLFYGTQTG…RIKTWVSQLK (162 aa)).

Belongs to the flavodoxin family. Requires FMN as cofactor.

Low-potential electron donor to a number of redox enzymes. This chain is Flavodoxin (isiB), found in Synechococcus elongatus (strain ATCC 33912 / PCC 7942 / FACHB-805) (Anacystis nidulans R2).